We begin with the raw amino-acid sequence, 230 residues long: MISPIKNIKNVFPINTANTEYIVRNIYPRVEHGYFNESPNIYDKKYISGITRSMAQLKIEEFINEKSRRLNYMKTMYSPCPEDFQPISRDEASIPEGSWLTVISGKRPMGQFSVDSLYHPDLHALCELPEISCKIFPKENSDFLYIIVVFRNDSPQGELRANRFIELYDIKREIMQVLRDESPELKSIKSEIIIAREMGELFSYASEEIDSYIKQMNDRFSQIKARMSVT.

Residues 49–52 (GITR) are interaction with host proteins TAB2, TAB3 and ZRANB3. The S-adenosyl-L-methionine site is built by alanine 92, serine 98, arginine 107, glutamine 111, tyrosine 204, and glutamate 208.

This sequence belongs to the NleE/OspZ family. In terms of assembly, monomer.

Its subcellular location is the secreted. The protein localises to the host cytoplasm. It localises to the host nucleus. It catalyses the reaction L-cysteinyl-[protein] + S-adenosyl-L-methionine = S-methyl-L-cysteinyl-[protein] + S-adenosyl-L-homocysteine + H(+). Functionally, cysteine methyltransferase effector that inhibits host cell NF-kappa-B activation by preventing nuclear translocation of host protein RELA/p65. Acts by mediating cysteine methylation of host proteins TAB2 and TAB3: methylation of a conserved cysteine residue of the RanBP2-type zinc finger (NZF) of TAB2 and TAB3 disrupts zinc-binding, thereby inactivating the ubiquitin chain-binding activity of TAB2 and TAB3, leading to NF-kappa-B inactivation. Also mediates cysteine methylation of host protein ZRANB3, inactivating its ability to bind ubiquitin chains. This is Cysteine S-methyltransferase OspZ from Shigella flexneri.